The primary structure comprises 521 residues: MMSTSSDSRSDEGHAACLLNQLDVKVRHLVADSRKLKPGDTFLACAGERHDARNDIPQAIARGVNAIIWEKQGFSWKPEWKIPNLGVAGLRHEAGKIASEAYGHPSRHLWLVGITGTNGKTTCSQWYAQAMAALGKKTAVIGTLGHGFPGALYPSEHTTPDAVYLQQLMAEYLHQGASSLVMEASSHGLSQDRLIGSEFAVAVLTNLTRDHLDYHDSMDAYAAAKAKLFFWEGLQYAVLNLDEVLGVELSQQLAGKDLSIIGYGFKQPRQTAQTAGNQKILYGSNLQFTTQQIGFDVEFCNRYASLQCNVTGRYNAYNLLAVLAALLASNIDLDDAITALRQVQPIPGRMEKLGGGNQPVVIVDYAHTPDALNEVLTGLRETLAGTRIKKRIRKNQAKLICVIGCGGDRDRGKRPLIGEIASRLADEVIITSDNPRNENPADIISEVMLGASGKHCTSEVDRTAAIYRAIHGARKGDIVLIAGKGAETSQEIQGKKYPYDDREVVRQVLHDLAGPELQVQG.

Serine 33 is a UDP-N-acetyl-alpha-D-muramoyl-L-alanyl-D-glutamate binding site. 116–122 (GTNGKTT) lines the ATP pocket. UDP-N-acetyl-alpha-D-muramoyl-L-alanyl-D-glutamate-binding positions include 158–159 (TT), serine 185, glutamine 191, and arginine 193. N6-carboxylysine is present on lysine 225. Residues arginine 409, 433-436 (DNPR), glycine 483, and glutamate 487 each bind meso-2,6-diaminopimelate. A Meso-diaminopimelate recognition motif motif is present at residues 433–436 (DNPR).

This sequence belongs to the MurCDEF family. MurE subfamily. Mg(2+) serves as cofactor. Post-translationally, carboxylation is probably crucial for Mg(2+) binding and, consequently, for the gamma-phosphate positioning of ATP.

It localises to the cytoplasm. It carries out the reaction UDP-N-acetyl-alpha-D-muramoyl-L-alanyl-D-glutamate + meso-2,6-diaminopimelate + ATP = UDP-N-acetyl-alpha-D-muramoyl-L-alanyl-gamma-D-glutamyl-meso-2,6-diaminopimelate + ADP + phosphate + H(+). The protein operates within cell wall biogenesis; peptidoglycan biosynthesis. Its function is as follows. Catalyzes the addition of meso-diaminopimelic acid to the nucleotide precursor UDP-N-acetylmuramoyl-L-alanyl-D-glutamate (UMAG) in the biosynthesis of bacterial cell-wall peptidoglycan. In Nitrosomonas europaea (strain ATCC 19718 / CIP 103999 / KCTC 2705 / NBRC 14298), this protein is UDP-N-acetylmuramoyl-L-alanyl-D-glutamate--2,6-diaminopimelate ligase.